The following is a 146-amino-acid chain: Hemoglobin subunit beta-2 (146 aa).

Residues 2 to 146 enclose the Globin domain; sequence EWTDFERATI…VVSSLGRQYH (145 aa). 2 residues coordinate heme b: His63 and His92.

This sequence belongs to the globin family. As to quaternary structure, hb 2 is a heterotetramer of two alpha-2 and two beta-2 chains. As to expression, red blood cells.

Functionally, involved in oxygen transport from gills to the various peripheral tissues. The polypeptide is Hemoglobin subunit beta-2 (hbb2) (Gobionotothen gibberifrons (Humped rockcod)).